Here is a 1193-residue protein sequence, read N- to C-terminus: MNINDNLSINSPVDNKNVVVVRARKTDTVFKAFKVAPNIWVAPERYYGESLSIDEEYKVDGGIYDSNFLSQDSEKDKFLQAIITLLKRINSTNAGEKLLSLISTAIPFPYGYIGGGYYAPNMITFGSAPKSNKKLNSLISSTIPFPYAGYRETNYLSSEDNKSFYASNIVIFGPGANIVENNTVFYKKEDAENGMGTMTEIWFQPFLTYKYDEFYIDPAIELIKCLIKSLYFLYGIKPSDDLVIPYRLRSELENIEYSQLNIVDLLVSGGIDPKFINTDPYWFTDNYFSNAKKVFEDHRNIYETEIEGNNAIGNDIKLRLKQKFRININDIWELNLNYFSKEFSIMMPDRFNNALKHFYRKQYYKIDYPENYSINGFVNGQINAQLSLSDRNQDIINKPEEIINLLNGNNVSLMRSNIYGDGLKSTVDDFYSNYKIPYNRAYEYHFNNSNDSSLDNVNIGVIDNIPEIIDVNPYKENCDKFSPVQKITSTREINTNIPWPINYLQAQNTNNEKFSLSSDFVEVVSSKDKSLVYSFLSNVMFYLDSIKDNSPIDTDKKYYLWLREIFRNYSFDITATQEINTNCGINKVVTWFGKALNILNTSDSFVEEFQNLGAISLINKKENLSMPIIESYEIPNDMLGLPLNDLNEKLFNIYSKNTAYFKKIYYNFLDQWWTQYYSQYFDLICMAKRSVLAQETLIKRIIQKKLSYLIGNSNISSDNLALMNLTTTNTLRDISNESQIAMNNVDSFLNNAAICVFESNIYPKFISFMEQCINNINIKTKEFIQKCTNINEDEKLQLINQNVFNSLDFEFLNIQNMKSLFSSETALLIKEETWPYELVLYAFKEPGNNVIGDASGKNTSIEYSKDIGLVYGINSDALYLNGSNQSISFSNDFFENGLTNSFSIYFWLRNLGKDTIKSKLIGSKEDNCGWEIYFQDTGLVFNMIDSNGNEKNIYLSDVSNNSWHYITISVDRLKEQLLIFIDDNLVANESIKEILNIYSSNIISLLSENNPSYIEGLTILNKPTTSQEVLSNYFEVLNNSYIRDSNEERLEYNKTYQLYNYVFSDKPICEVKQNNNIYLTINNTNNLNLQASKFKLLSINPNKQYVQKLDEVIISVLDNMEKYIDISEDNRLQLIDNKNNAKKMIISNDIFISNCLTLSYNGKYICLSMKDENHNWMICNNDMSKYLYLWSFK.

Residues 1 to 408 form a light chain nLC region; it reads MNINDNLSIN…PEEIINLLNG (408 aa). Residues 409-829 are N-heavy chain nHN; that stretch reads NNVSLMRSNI…LFSSETALLI (421 aa). Cys583 and Cys755 are disulfide-bonded. Positions 830-1193 are C-heavy chain nHC; required for protection of BoNT/A at pH 2.0; that stretch reads KEETWPYELV…SKYLYLWSFK (364 aa).

The protein belongs to the botulism non-toxic nonhemagglutinin family. In terms of assembly, forms a highly interlocked heterodimer with botulinum neurotoxin type A at pH 6.0 but not at pH 7.5, called the minimally functional progenitor toxin complex (M-PTC) (BoNT/A, botA). The 133-Lys-|-Lys-134 bond is cleaved during long-term storage; the cleavage site is masked in the M-PTC complex.

Its function is as follows. Assembles with botulinum neurotoxin type A (BoNT/A) and protects it against pH-mediated inactivation or protease activity at pH 2.6 (the pH of the animal gastrointestinal tract) but not at pH 6.0. Necessary for neurotoxicity. In Clostridium botulinum, this protein is Non-toxic nonhemagglutinin type A.